Consider the following 501-residue polypeptide: MSSFILAIDQGTTSTRAILFNEEAKLVHYHHVEITQYFPQGGWVEHDPEEIWDSTLLCCRNVLEEASLRAADIAALGISNQRETTILWDRHTGQPLYRAIGWQDRRTVNFCEQLASQAGVLAKFVEKTGLILDPYFSCSKIKWILDNIKGAYEKAKRGELAFGTVDSYLLWKFTGGKCHATDATNASRTGLFNINQQRWDDELLTLFDIPKSLLPTVLDNCAQFGFTDLDLLGHKIPITAMIGDQQAAAVGQACIKPGMVKSTYGTGCFMLLNTGDQIIHSRNRLLATIAYRLNDTVTYGLEGSIFIAGAAVKWLRDPLHLIEKANDSESMASSVEDTGGVYLVPAFTGLGAPYWDPNARGALFGLTRNTQREHIVRAALEAVCYQSKDLVRAILNDGANLTTLRVDGGMAANNWLLQFLSDILGVNVDRSRCIESSALGTAFLAGLGAGLFDSLEEMTGLWQADRHFIPQMDPKKREELYDGWQKAVEKTLTPAAPLLFP.

Thr12 is a binding site for ADP. ATP-binding residues include Thr12, Thr13, and Ser14. Residue Thr12 participates in sn-glycerol 3-phosphate binding. An ADP-binding site is contributed by Arg16. Residues Arg82, Glu83, Tyr135, and Asp244 each coordinate sn-glycerol 3-phosphate. Glycerol-binding residues include Arg82, Glu83, Tyr135, Asp244, and Gln245. Positions 266, 309, 409, and 413 each coordinate ADP. 3 residues coordinate ATP: Thr266, Gly309, and Gly409.

The protein belongs to the FGGY kinase family.

The catalysed reaction is glycerol + ATP = sn-glycerol 3-phosphate + ADP + H(+). It participates in polyol metabolism; glycerol degradation via glycerol kinase pathway; sn-glycerol 3-phosphate from glycerol: step 1/1. Inhibited by fructose 1,6-bisphosphate (FBP). In terms of biological role, key enzyme in the regulation of glycerol uptake and metabolism. Catalyzes the phosphorylation of glycerol to yield sn-glycerol 3-phosphate. This is Glycerol kinase from Coxiella burnetii (strain Dugway 5J108-111).